The following is a 113-amino-acid chain: Protein S100-A9 (113 aa).

At Ala-2 the chain carries N-acetylalanine. EF-hand domains follow at residues 13–48 and 55–90; these read ISTIINVFHQYSRKYGHPDTLNKAEFKEMVNKDLPN and RNENLLRDIMEDLDTNQDNQLSFEECMMLMGKLIFA. Zn(2+) is bound at residue His-21. Ca(2+) is bound by residues Ser-24 and His-29. Asp-31 serves as a coordination point for Zn(2+). Ca(2+)-binding residues include Thr-32, Glu-37, Asp-68, Asn-70, Asp-72, Gln-74, and Glu-79. Zn(2+) contacts are provided by His-92 and His-96. Residue His-107 is modified to Pros-methylhistidine.

In terms of assembly, homodimer. Preferentially exists as a heterodimer or heterotetramer with S100A8 known as calprotectin (S100A8/A9). S100A9 interacts with ATP2A2. S100A9 interacts with AGER, and with the heterodimeric complex formed by TLR4 and LY96 in the presence of calcium and/or zinc ions. S100A9 binds quinoline-3-carboxamides in the presence of calcium and/or zinc ions. S100A9 interacts with amyloid-beta protein 40. Calprotectin (S100A8/9) interacts with CEACAM3 and tubulin filaments in a calcium-dependent manner. Heterotetrameric calprotectin (S100A8/A9) interacts with ANXA6 and associates with tubulin filaments in activated monocytes. Calprotectin (S100A8/9) interacts with NCF2/P67PHOX, RAC1, RAC2, CYBA and CYBB. Calprotectin (S100A8/9) interacts with NOS2 to form the iNOS-S100A8/A9 transnitrosylase complex; induced by LDL(ox). Calprotectin (S100A8/9) interacts with CD69. Phosphorylated. Phosphorylation inhibits activation of tubulin polymerization. Post-translationally, methylation at His-107 by METTL9 reduces zinc-binding without affecting heterodimerization with S100A8. In terms of tissue distribution, highly expressed at sites of inflammation.

It localises to the secreted. It is found in the cytoplasm. Its subcellular location is the cytoskeleton. The protein resides in the cell membrane. Functionally, S100A9 is a calcium- and zinc-binding protein which plays a prominent role in the regulation of inflammatory processes and immune response. It can induce neutrophil chemotaxis, adhesion, can increase the bactericidal activity of neutrophils by promoting phagocytosis via activation of SYK, PI3K/AKT, and ERK1/2 and can induce degranulation of neutrophils by a MAPK-dependent mechanism. Predominantly found as calprotectin (S100A8/A9) which has a wide plethora of intra- and extracellular functions. The intracellular functions include: facilitating leukocyte arachidonic acid trafficking and metabolism, modulation of the tubulin-dependent cytoskeleton during migration of phagocytes and activation of the neutrophilic NADPH-oxidase. Also participates in regulatory T-cell differentiation together with CD69. Activates NADPH-oxidase by facilitating the enzyme complex assembly at the cell membrane, transferring arachidonic acid, an essential cofactor, to the enzyme complex and S100A8 contributes to the enzyme assembly by directly binding to NCF2/P67PHOX. The extracellular functions involve pro-inflammatory, antimicrobial, oxidant-scavenging and apoptosis-inducing activities. Its pro-inflammatory activity includes recruitment of leukocytes, promotion of cytokine and chemokine production, and regulation of leukocyte adhesion and migration. Acts as an alarmin or a danger associated molecular pattern (DAMP) molecule and stimulates innate immune cells via binding to pattern recognition receptors such as Toll-like receptor 4 (TLR4) and receptor for advanced glycation endproducts (AGER). Binding to TLR4 and AGER activates the MAP-kinase and NF-kappa-B signaling pathways resulting in the amplification of the pro-inflammatory cascade. Has antimicrobial activity towards bacteria and fungi and exerts its antimicrobial activity probably via chelation of Zn(2+) which is essential for microbial growth. Can induce cell death via autophagy and apoptosis and this occurs through the cross-talk of mitochondria and lysosomes via reactive oxygen species (ROS) and the process involves BNIP3. Can regulate neutrophil number and apoptosis by an anti-apoptotic effect; regulates cell survival via ITGAM/ITGB and TLR4 and a signaling mechanism involving MEK-ERK. Its role as an oxidant scavenger has a protective role in preventing exaggerated tissue damage by scavenging oxidants. The iNOS-S100A8/A9 transnitrosylase complex is proposed to direct selective inflammatory stimulus-dependent S-nitrosylation of multiple targets such as GAPDH, NXA5, EZR, MSN and VIM by recognizing a [IL]-x-C-x-x-[DE] motif. This Rattus norvegicus (Rat) protein is Protein S100-A9 (S100a9).